A 1849-amino-acid polypeptide reads, in one-letter code: TATA-binding protein-associated factor 172 (1849 aa).

The interval 77-97 (NPVPRTRQEPTSESSMEDSPT) is disordered. Over residues 85–97 (EPTSESSMEDSPT) the composition is skewed to polar residues. Phosphoserine is present on residues Ser91 and Ser95. Positions 191-207 (QAAELIDSEFRAGMSNR) match the Nuclear localization signal motif. The disordered stretch occupies residues 219 to 247 (FAKQRSRDAVETNEKSNDSTDGEPEEKRR). Residues 223 to 236 (RSRDAVETNEKSND) are compositionally biased toward basic and acidic residues. 8 HEAT repeats span residues 385 to 422 (TGVHKTVDVLLKLLTQEQWEVRHGGLLGIKYALAVRQD), 426 to 463 (TLLPKVLTRIIEGLQDLDDDVRAVAAASLVPVVESLVY), 513 to 550 (QSLTVLVPRVWPFLHHTISSVRRAALETLFTLLSTQDQ), 554 to 596 (SWLI…KASV), 818 to 855 (TSSFDLNPQVLQQLDSKRQQVQMTVTETNQEWQVLQLR), 872 to 910 (EKLNPIIKPLMETIKKEENTLVQNYAAQCIAKLLQQCTT), 1102 to 1139 (PLLVQHLPHLYMCLQYPSTAVRHMAARCVGVMSKIATM), and 1182 to 1219 (PYIVLLVVPVLGRMSDQTDSVRFMATQCFATLIRLMPL). Positions 1278–1453 (AFLNKYKLHG…WSLFDFLMPG (176 aa)) constitute a Helicase ATP-binding domain. 1291-1298 (DDMGLGKT) is a binding site for ATP. The DEGH box signature appears at 1404–1407 (DEGH). Positions 1636 to 1790 (SGTESVVAQH…QENSSLQSMG (155 aa)) constitute a Helicase C-terminal domain.

The protein belongs to the SNF2/RAD54 helicase family. As to quaternary structure, associates with TBP to form B-TFIID. Binds DRAP1.

Its subcellular location is the nucleus. Functionally, regulates transcription in association with TATA binding protein (TBP). Removes TBP from the TATA box in an ATP-dependent manner. This is TATA-binding protein-associated factor 172 (BTAF1) from Homo sapiens (Human).